We begin with the raw amino-acid sequence, 260 residues long: Large ribosomal subunit protein uL4 (260 aa).

This sequence belongs to the universal ribosomal protein uL4 family. Part of the 50S ribosomal subunit.

Functionally, one of the primary rRNA binding proteins, this protein initially binds near the 5'-end of the 23S rRNA. It is important during the early stages of 50S assembly. It makes multiple contacts with different domains of the 23S rRNA in the assembled 50S subunit and ribosome. In terms of biological role, forms part of the polypeptide exit tunnel. The chain is Large ribosomal subunit protein uL4 from Methanopyrus kandleri (strain AV19 / DSM 6324 / JCM 9639 / NBRC 100938).